Reading from the N-terminus, the 638-residue chain is Growth hormone receptor (638 aa).

Residues 1-18 (MDLWQLLLTLALAGSSDA) form the signal peptide. Residues 19–264 (FSGSEPTAAI…NQFTCEEDFY (246 aa)) lie on the Extracellular side of the membrane. Asparagine 46 carries N-linked (GlcNAc...) asparagine glycosylation. 2 disulfides stabilise this stretch: cysteine 56-cysteine 66 and cysteine 101-cysteine 112. Asparagine 115 carries an N-linked (GlcNAc...) asparagine glycan. Cysteine 126 and cysteine 140 are joined by a disulfide. The Fibronectin type-III domain maps to 151-254 (PPIALNWTLL…EVLYVTLPQM (104 aa)). N-linked (GlcNAc...) asparagine glycosylation is found at asparagine 156, asparagine 161, and asparagine 200. Positions 240–244 (YGEFS) match the WSXWS motif motif. The helical transmembrane segment at 265 to 288 (FPWLLIIIFGIFGLTVMLFVFLFS) threads the bilayer. Over 289 to 638 (KQQRIKMLIL…STDQLNKIMP (350 aa)) the chain is Cytoplasmic. Positions 294–379 (KMLILPPVPV…HQKSHSNLGV (86 aa)) are required for JAK2 binding. The Box 1 motif signature appears at 297–305 (ILPPVPVPK). Residues 340–349 (DSWVEFIELD) carry the UbE motif motif. At serine 341 the chain carries Phosphoserine. Residues 353–388 (PDEKNEGSDTDRLLSSDHQKSHSNLGVKDGDSGRTS) are disordered. Basic and acidic residues predominate over residues 356-372 (KNEGSDTDRLLSSDHQK). Phosphotyrosine is present on residues tyrosine 487 and tyrosine 595.

Belongs to the type I cytokine receptor family. Type 1 subfamily. As to quaternary structure, on growth hormone (GH) binding, forms homodimers and binds JAK2 via a box 1-containing domain. Post-translationally, the soluble form (GHBP) is produced by phorbol ester-promoted proteolytic cleavage at the cell surface (shedding) by ADAM17/TACE. Shedding is inhibited by growth hormone (GH) binding to the receptor probably due to a conformational change in GHR rendering the receptor inaccessible to ADAM17. In terms of processing, on GH binding, phosphorylated on tyrosine residues in the cytoplasmic domain by JAK2. Ubiquitinated by the ECS(SOCS2) complex following ligand-binding and phosphorylation by JAK2, leading to its degradation by the proteasome. Regulation by the ECS(SOCS2) complex acts as a negative feedback loop of growth hormone receptor signaling. Ubiquitination is not sufficient for GHR internalization.

The protein localises to the cell membrane. The protein resides in the secreted. In terms of biological role, receptor for pituitary gland growth hormone (GH1) involved in regulating postnatal body growth. On ligand binding, couples to the JAK2/STAT5 pathway. Functionally, the soluble form (GHBP) acts as a reservoir of growth hormone in plasma and may be a modulator/inhibitor of GH signaling. The sequence is that of Growth hormone receptor (GHR) from Macaca mulatta (Rhesus macaque).